The sequence spans 401 residues: Membrane protein UL43 homolog (401 aa).

Transmembrane regions (helical) follow at residues 43-63 (FVGI…IDLL), 67-87 (STCL…RVPI), 93-113 (IVTV…SVWV), 124-144 (LIVV…ISLF), 159-179 (ASLL…LVEL), 182-202 (VPIG…FGLA), 259-279 (PGVI…WIVL), 294-314 (YVVF…QLVI), 332-352 (AVCM…SLAF), and 379-399 (ISRW…ATII).

This sequence belongs to the alphaherpesvirinae HHV-1 UL43 family.

It localises to the membrane. This is Membrane protein UL43 homolog from Equine herpesvirus 1 (strain Ab4p) (EHV-1).